Consider the following 128-residue polypeptide: Small ribosomal subunit protein uS14m (128 aa).

It belongs to the universal ribosomal protein uS14 family. Component of the mitochondrial small ribosomal subunit (mt-SSU). Mature mammalian 55S mitochondrial ribosomes consist of a small (28S) and a large (39S) subunit. The 28S small subunit contains a 12S ribosomal RNA (12S mt-rRNA) and 30 different proteins. The 39S large subunit contains a 16S rRNA (16S mt-rRNA), a copy of mitochondrial valine transfer RNA (mt-tRNA(Val)), which plays an integral structural role, and 52 different proteins. Interacts with LIAT1.

The protein resides in the mitochondrion. The protein is Small ribosomal subunit protein uS14m of Homo sapiens (Human).